The following is a 224-amino-acid chain: Uridylate kinase (224 aa).

9–10 (GS) contacts ATP. G43 contributes to the UMP binding site. ATP is bound by residues G44 and R48. UMP contacts are provided by residues D65 and 113–119 (TEPAHST). T139, Y145, and D148 together coordinate ATP.

This sequence belongs to the UMP kinase family. As to quaternary structure, homohexamer.

The protein resides in the cytoplasm. The catalysed reaction is UMP + ATP = UDP + ADP. Its pathway is pyrimidine metabolism; CTP biosynthesis via de novo pathway; UDP from UMP (UMPK route): step 1/1. With respect to regulation, inhibited by UTP. Functionally, catalyzes the reversible phosphorylation of UMP to UDP. This is Uridylate kinase from Methanothermobacter thermautotrophicus (strain ATCC 29096 / DSM 1053 / JCM 10044 / NBRC 100330 / Delta H) (Methanobacterium thermoautotrophicum).